A 183-amino-acid polypeptide reads, in one-letter code: Nodulation protein L (183 aa).

This sequence belongs to the transferase hexapeptide repeat family.

In terms of biological role, acetyltransferase implicated in the O-acetylation of Nod factors. This chain is Nodulation protein L (nodL), found in Rhizobium meliloti (strain 1021) (Ensifer meliloti).